The chain runs to 193 residues: 5'RNA triphosphatase A449R (193 aa).

It depends on Mn(2+) as a cofactor.

It carries out the reaction a 5'-end triphospho-ribonucleoside in mRNA + H2O = a 5'-end diphospho-ribonucleoside in mRNA + phosphate + H(+). Catalyzes the first stes of cap formation: by removing the gamma-phosphate from the 5'-triphosphate end of nascent mRNA to yield a diphosphate end. This chain is 5'RNA triphosphatase A449R (A449R), found in Chlorella (PBCV-1).